The following is a 75-amino-acid chain: Cytochrome c oxidase assembly factor 5 (75 aa).

The CHCH domain occupies 28 to 66 (QTDCVLQEGKSPKECLKEGYCKALQVTFFECKRSILDTR). The short motif at 31–42 (CVLQEGKSPKEC) is the Cx10C motif element. 2 cysteine pairs are disulfide-bonded: cysteine 31–cysteine 58 and cysteine 42–cysteine 48. The Cx9C motif motif lies at 48-58 (CKALQVTFFEC).

It belongs to the PET191 family.

Its function is as follows. Involved in an early step of the mitochondrial complex IV assembly process. This chain is Cytochrome c oxidase assembly factor 5 (coa5), found in Xenopus tropicalis (Western clawed frog).